The primary structure comprises 399 residues: Protein DDI1 homolog 2 (399 aa).

A Ubiquitin-like domain is found at 1-81 (MLLTVYCVRR…VILRQKENAD (81 aa)). Residues 99–134 (IAVPGTSSPRQRQPPGTQQSHSSPGEITSSPQGLDN) are disordered. Polar residues predominate over residues 103-131 (GTSSPRQRQPPGTQQSHSSPGEITSSPQG). Position 104 is a phosphothreonine (threonine 104). Serine 106, serine 121, serine 128, serine 150, and serine 194 each carry phosphoserine. The active site involves aspartate 252. The short motif at 376 to 395 (EEIADQELAEALQKSAEDAE) is the Ubiquitin-binding element.

Belongs to the DDI1 family. In terms of assembly, homodimer. Interacts with MCM6; PCNA; PSMD4; PSMD8; RPA2 and RPN2. Interacts with RTF2.

Its subcellular location is the cytoplasm. It localises to the cytosol. The protein localises to the chromosome. Aspartic protease that mediates the cleavage of NFE2L1/NRF1 at 'Leu-104', thereby promoting release of NFE2L1/NRF1 from the endoplasmic reticulum membrane. Ubiquitination of NFE2L1/NRF1 is a prerequisite for cleavage, suggesting that DDI2 specifically recognizes and binds ubiquitinated NFE2L1/NRF1. Seems to act as a proteasomal shuttle which links the proteasome and replication fork proteins like RTF2. Required, with DDI1, for cellular survival following replication stress. Together or redudantly with DDI1, removes RTF2 from stalled forks to allow cell cycle progression after replication stress and maintains genome integrity. The polypeptide is Protein DDI1 homolog 2 (Homo sapiens (Human)).